The following is an 826-amino-acid chain: Arsenite oxidase subunit AioA (826 aa).

[3Fe-4S] cluster is bound by residues Cys-22, Cys-25, and Cys-29. 4 residues coordinate substrate: His-196, Glu-204, Arg-419, and His-423.

Belongs to the prokaryotic molybdopterin-containing oxidoreductase family. Heterodimer consisting of a large and a small subunit. [3Fe-4S] cluster serves as cofactor. It depends on Mo-bis(molybdopterin guanine dinucleotide) as a cofactor.

The enzyme catalyses 2 oxidized [azurin] + arsenite + H2O = 2 reduced [azurin] + arsenate + 3 H(+). Functionally, involved in the detoxification of arsenic. Oxidizes As(III)O3(3-) (arsenite) to the somewhat less toxic As(V)O4(3-) (arsenate). In Herminiimonas arsenicoxydans, this protein is Arsenite oxidase subunit AioA (aioA).